We begin with the raw amino-acid sequence, 75 residues long: Small ribosomal subunit protein bS18 (75 aa).

This sequence belongs to the bacterial ribosomal protein bS18 family. As to quaternary structure, part of the 30S ribosomal subunit. Forms a tight heterodimer with protein bS6.

Functionally, binds as a heterodimer with protein bS6 to the central domain of the 16S rRNA, where it helps stabilize the platform of the 30S subunit. The protein is Small ribosomal subunit protein bS18 of Pseudoalteromonas translucida (strain TAC 125).